The following is a 556-amino-acid chain: 2-succinyl-5-enolpyruvyl-6-hydroxy-3-cyclohexene-1-carboxylate synthase (556 aa).

This sequence belongs to the TPP enzyme family. MenD subfamily. As to quaternary structure, homodimer. Requires Mg(2+) as cofactor. Mn(2+) serves as cofactor. The cofactor is thiamine diphosphate.

The enzyme catalyses isochorismate + 2-oxoglutarate + H(+) = 5-enolpyruvoyl-6-hydroxy-2-succinyl-cyclohex-3-ene-1-carboxylate + CO2. It functions in the pathway quinol/quinone metabolism; 1,4-dihydroxy-2-naphthoate biosynthesis; 1,4-dihydroxy-2-naphthoate from chorismate: step 2/7. Its pathway is quinol/quinone metabolism; menaquinone biosynthesis. In terms of biological role, catalyzes the thiamine diphosphate-dependent decarboxylation of 2-oxoglutarate and the subsequent addition of the resulting succinic semialdehyde-thiamine pyrophosphate anion to isochorismate to yield 2-succinyl-5-enolpyruvyl-6-hydroxy-3-cyclohexene-1-carboxylate (SEPHCHC). This Escherichia coli O45:K1 (strain S88 / ExPEC) protein is 2-succinyl-5-enolpyruvyl-6-hydroxy-3-cyclohexene-1-carboxylate synthase.